We begin with the raw amino-acid sequence, 332 residues long: Methionine synthase (332 aa).

The Zn(2+) site is built by H211, C213, and C296.

Belongs to the archaeal MetE family. Zn(2+) is required as a cofactor.

It functions in the pathway amino-acid biosynthesis; L-methionine biosynthesis via de novo pathway. Catalyzes the transfer of a methyl group to L-homocysteine resulting in methionine formation. The physiological methyl donor is unknown. This Saccharolobus islandicus (strain Y.N.15.51 / Yellowstone #2) (Sulfolobus islandicus) protein is Methionine synthase.